We begin with the raw amino-acid sequence, 878 residues long: Pyruvate, phosphate dikinase (878 aa).

The segment at 1-347 (MKKLIYYFGS…LYILQTRTAK (347 aa)) is N-terminal. Arg-96 contributes to the ATP binding site. Residues 348–404 (RTAIAAIKIAVQMVEEKLISKEQALMRIDPESLNQLLHTRIDYSKGLTSIADGLPAS) are linker 1. The segment at 405 to 502 (PGAATGIIVF…ILKQDDIITI (98 aa)) is central. Phosphothreonine; by PDRP1 is present on Thr-457. His-459 (tele-phosphohistidine intermediate) is an active-site residue. The interval 503-537 (DGGTGKVFLGAVPLIQPTFSEESKLILEWADETSK) is linker 2. The segment at 538-878 (LKIRTNAETV…AAAQAKIKHG (341 aa)) is C-terminal. The substrate site is built by Arg-565, Arg-621, Glu-749, Gly-770, Thr-771, Asn-772, and Asp-773. A Mg(2+)-binding site is contributed by Glu-749. Residue Asp-773 participates in Mg(2+) binding. Cys-835 serves as the catalytic Proton donor.

It belongs to the PEP-utilizing enzyme family. As to quaternary structure, homodimer. Mg(2+) is required as a cofactor. Phosphorylation of Thr-457 in the dark inactivates the enzyme. Dephosphorylation upon light stimulation reactivates the enzyme.

It catalyses the reaction pyruvate + phosphate + ATP = phosphoenolpyruvate + AMP + diphosphate + H(+). Activated by light-induced dephosphorylation. Inhibited by dark-induced phosphorylation. Both reactions are catalyzed by PDRP1. Its function is as follows. Catalyzes the reversible phosphorylation of pyruvate and phosphate. This Rickettsia bellii (strain RML369-C) protein is Pyruvate, phosphate dikinase (ppdK).